The sequence spans 416 residues: Creatine kinase U-type, mitochondrial (416 aa).

A mitochondrion-targeting transit peptide spans 1 to 39 (MAGPFSRLLSARPGLRLLALAGAGSLAAGFLLRPEPIRA). The interval 40 to 63 (ASERRRQYPPSAEYPDLRKHNNCM) is cardiolipin-binding. The Phosphagen kinase N-terminal domain occupies 44 to 131 (RRQYPPSAEY…FDPVIQERHN (88 aa)). Ser-151 bears the Phosphoserine mark. The Phosphagen kinase C-terminal domain occupies 158 to 400 (YVLSSRVRTG…NYLIDCERRL (243 aa)). ATP is bound at residue 161–165 (SSRVR). Ser-196 is modified (phosphoserine). Position 213 is a phosphothreonine (Thr-213). Residue His-224 coordinates ATP. The residue at position 232 (Ser-232) is a Phosphoserine. ATP is bound by residues Arg-269, Arg-325, and 353 to 358 (RGTGGV). Position 355 is a phosphothreonine (Thr-355). Ser-365 carries the phosphoserine modification. Position 368 (Asp-368) interacts with ATP.

The protein belongs to the ATP:guanido phosphotransferase family. Exists as an octamer composed of four MTCK homodimers.

The protein resides in the mitochondrion inner membrane. It carries out the reaction creatine + ATP = N-phosphocreatine + ADP + H(+). Its function is as follows. Reversibly catalyzes the transfer of phosphate between ATP and various phosphogens (e.g. creatine phosphate). Creatine kinase isoenzymes play a central role in energy transduction in tissues with large, fluctuating energy demands, such as skeletal muscle, heart, brain and spermatozoa. This Sus scrofa (Pig) protein is Creatine kinase U-type, mitochondrial (CKMT1).